The following is a 422-amino-acid chain: Glutamate-1-semialdehyde 2,1-aminomutase (422 aa).

Lysine 258 carries the N6-(pyridoxal phosphate)lysine modification.

It belongs to the class-III pyridoxal-phosphate-dependent aminotransferase family. HemL subfamily. Homodimer. The cofactor is pyridoxal 5'-phosphate.

The protein resides in the cytoplasm. The catalysed reaction is (S)-4-amino-5-oxopentanoate = 5-aminolevulinate. Its pathway is porphyrin-containing compound metabolism; protoporphyrin-IX biosynthesis; 5-aminolevulinate from L-glutamyl-tRNA(Glu): step 2/2. The protein is Glutamate-1-semialdehyde 2,1-aminomutase of Chlamydia trachomatis serovar D (strain ATCC VR-885 / DSM 19411 / UW-3/Cx).